The sequence spans 505 residues: Cytochrome P450 CYP71D313 (505 aa).

Residues 1 to 21 (MELQFPLFSIFFVTILFFFLF) traverse the membrane as a helical segment. Cys-441 serves as a coordination point for heme. The helical transmembrane segment at 442-462 (PGIAFGIATIELPLALLLYHF) threads the bilayer.

This sequence belongs to the cytochrome P450 family. It depends on heme as a cofactor.

The protein localises to the membrane. In terms of biological role, probable heme-thiolate monooxygenase. The protein is Cytochrome P450 CYP71D313 of Panax ginseng (Korean ginseng).